Consider the following 333-residue polypeptide: Complement C1q and tumor necrosis factor-related protein 9 (333 aa).

An N-terminal signal peptide occupies residues 1-19; sequence MRIWWLLLVMGACTRSVFS. Residues 22–194 are disordered; that stretch reads TCRQGHSGIP…GDRGEKGKVG (173 aa). Collagen-like domains lie at 24-82, 84-130, and 134-193; these read RQGH…DGRV, AKGI…KGEV, and GPEG…KGKV. 4-hydroxyproline occurs at positions 31, 34, and 40. Residues 42-57 show a composition bias toward basic and acidic residues; that stretch reads RDGRDGAKGDKGDAGE. 4-hydroxyproline is present on residues proline 58, proline 61, and proline 64. The segment covering 67–88 has biased composition (basic and acidic residues); it reads DGIRGEKGEPGADGRVEAKGIK. Residue lysine 73 is modified to 5-hydroxylysine. O-linked (Gal...) hydroxylysine glycosylation is present at lysine 73. A 4-hydroxyproline mark is found at proline 76 and proline 115. Position 127 is a 5-hydroxylysine (lysine 127). The O-linked (Gal...) hydroxylysine glycan is linked to lysine 127. Proline 151, proline 160, and proline 175 each carry 4-hydroxyproline. The segment covering 183–193 has biased composition (basic and acidic residues); sequence WKGDRGEKGKV. The C1q domain maps to 197–333; that stretch reads PLVPKSAFTV…FTGFLLFSSS (137 aa).

Multimers (predominantly trimers). Interacts with ADIPOQ via the C1q domain to form a heterotrimeric complex. Post-translationally, the isomeric forms of the hydroxylated amino acids could not be determined in the mass-spectrometric methods reported in PubMed:18787108 but are assumed on the basis of their occurrence in collagen-like domains. As to expression, expressed predominantly in adipose tissue. Females express higher levels than males.

It localises to the secreted. Its function is as follows. Probable adipokine. Activates AMPK, AKT, and p44/42 MAPK signaling pathways. The polypeptide is Complement C1q and tumor necrosis factor-related protein 9 (C1qtnf9) (Mus musculus (Mouse)).